A 243-amino-acid chain; its full sequence is CR(VI) reductase (243 aa).

It belongs to the flavin oxidoreductase frp family. Requires FMN as cofactor.

This Pseudomonas sp. (strain G-1) protein is CR(VI) reductase (chrR).